The chain runs to 206 residues: NADH-quinone oxidoreductase subunit C (206 aa).

It belongs to the complex I 30 kDa subunit family. As to quaternary structure, NDH-1 is composed of 14 different subunits. Subunits NuoB, C, D, E, F, and G constitute the peripheral sector of the complex.

It localises to the cell inner membrane. The catalysed reaction is a quinone + NADH + 5 H(+)(in) = a quinol + NAD(+) + 4 H(+)(out). Its function is as follows. NDH-1 shuttles electrons from NADH, via FMN and iron-sulfur (Fe-S) centers, to quinones in the respiratory chain. The immediate electron acceptor for the enzyme in this species is believed to be ubiquinone. Couples the redox reaction to proton translocation (for every two electrons transferred, four hydrogen ions are translocated across the cytoplasmic membrane), and thus conserves the redox energy in a proton gradient. The sequence is that of NADH-quinone oxidoreductase subunit C from Nitrosomonas europaea (strain ATCC 19718 / CIP 103999 / KCTC 2705 / NBRC 14298).